We begin with the raw amino-acid sequence, 238 residues long: 2-C-methyl-D-erythritol 4-phosphate cytidylyltransferase (238 aa).

It belongs to the IspD/TarI cytidylyltransferase family. IspD subfamily.

The enzyme catalyses 2-C-methyl-D-erythritol 4-phosphate + CTP + H(+) = 4-CDP-2-C-methyl-D-erythritol + diphosphate. The protein operates within isoprenoid biosynthesis; isopentenyl diphosphate biosynthesis via DXP pathway; isopentenyl diphosphate from 1-deoxy-D-xylulose 5-phosphate: step 2/6. Catalyzes the formation of 4-diphosphocytidyl-2-C-methyl-D-erythritol from CTP and 2-C-methyl-D-erythritol 4-phosphate (MEP). The polypeptide is 2-C-methyl-D-erythritol 4-phosphate cytidylyltransferase (Shewanella amazonensis (strain ATCC BAA-1098 / SB2B)).